A 109-amino-acid chain; its full sequence is Large ribosomal subunit protein uL24 (109 aa).

It belongs to the universal ribosomal protein uL24 family. As to quaternary structure, part of the 50S ribosomal subunit.

Its function is as follows. One of two assembly initiator proteins, it binds directly to the 5'-end of the 23S rRNA, where it nucleates assembly of the 50S subunit. Functionally, one of the proteins that surrounds the polypeptide exit tunnel on the outside of the subunit. This chain is Large ribosomal subunit protein uL24, found in Rickettsia akari (strain Hartford).